The sequence spans 306 residues: Methionyl-tRNA formyltransferase (306 aa).

110 to 113 (SLLP) contacts (6S)-5,6,7,8-tetrahydrofolate.

This sequence belongs to the Fmt family.

It carries out the reaction L-methionyl-tRNA(fMet) + (6R)-10-formyltetrahydrofolate = N-formyl-L-methionyl-tRNA(fMet) + (6S)-5,6,7,8-tetrahydrofolate + H(+). Its function is as follows. Attaches a formyl group to the free amino group of methionyl-tRNA(fMet). The formyl group appears to play a dual role in the initiator identity of N-formylmethionyl-tRNA by promoting its recognition by IF2 and preventing the misappropriation of this tRNA by the elongation apparatus. This Brucella anthropi (strain ATCC 49188 / DSM 6882 / CCUG 24695 / JCM 21032 / LMG 3331 / NBRC 15819 / NCTC 12168 / Alc 37) (Ochrobactrum anthropi) protein is Methionyl-tRNA formyltransferase.